The primary structure comprises 847 residues: DNA mismatch repair protein MutS (847 aa).

Residue 603–610 (GPNMSGKS) coordinates ATP.

It belongs to the DNA mismatch repair MutS family.

Its function is as follows. This protein is involved in the repair of mismatches in DNA. It is possible that it carries out the mismatch recognition step. This protein has a weak ATPase activity. In Streptococcus suis (strain 98HAH33), this protein is DNA mismatch repair protein MutS.